The sequence spans 132 residues: Large ribosomal subunit protein uL14 (132 aa).

It belongs to the universal ribosomal protein uL14 family. As to quaternary structure, part of the 50S ribosomal subunit. Forms a cluster with proteins L3 and L24e, part of which may contact the 16S rRNA in 2 intersubunit bridges.

Its function is as follows. Binds to 23S rRNA. Forms part of two intersubunit bridges in the 70S ribosome. The chain is Large ribosomal subunit protein uL14 from Methanoregula boonei (strain DSM 21154 / JCM 14090 / 6A8).